The chain runs to 569 residues: Sulfite reductase [NADPH] hemoprotein beta-component (569 aa).

[4Fe-4S] cluster-binding residues include Cys-434, Cys-440, Cys-479, and Cys-483. Cys-483 provides a ligand contact to siroheme.

It belongs to the nitrite and sulfite reductase 4Fe-4S domain family. Alpha(8)-beta(8). The alpha component is a flavoprotein, the beta component is a hemoprotein. It depends on siroheme as a cofactor. The cofactor is [4Fe-4S] cluster.

It carries out the reaction hydrogen sulfide + 3 NADP(+) + 3 H2O = sulfite + 3 NADPH + 4 H(+). Its pathway is sulfur metabolism; hydrogen sulfide biosynthesis; hydrogen sulfide from sulfite (NADPH route): step 1/1. In terms of biological role, component of the sulfite reductase complex that catalyzes the 6-electron reduction of sulfite to sulfide. This is one of several activities required for the biosynthesis of L-cysteine from sulfate. In Staphylococcus saprophyticus subsp. saprophyticus (strain ATCC 15305 / DSM 20229 / NCIMB 8711 / NCTC 7292 / S-41), this protein is Sulfite reductase [NADPH] hemoprotein beta-component.